A 138-amino-acid chain; its full sequence is Acidic phospholipase A2 beta (138 aa).

An N-terminal signal peptide occupies residues 1–16; that stretch reads MRTLWIVAVLLLGVEG. Cystine bridges form between C42-C131, C44-C60, C59-C111, C65-C138, C66-C104, C73-C97, and C91-C102. 3 residues coordinate Ca(2+): Y43, G45, and G47. The active site involves H63. D64 is a binding site for Ca(2+). Residue D105 is part of the active site.

The protein belongs to the phospholipase A2 family. Group II subfamily. D49 sub-subfamily. Dimer. The cofactor is Ca(2+). In terms of tissue distribution, expressed by the venom gland.

The protein localises to the secreted. It catalyses the reaction a 1,2-diacyl-sn-glycero-3-phosphocholine + H2O = a 1-acyl-sn-glycero-3-phosphocholine + a fatty acid + H(+). PLA2 catalyzes the calcium-dependent hydrolysis of the 2-acyl groups in 3-sn-phosphoglycerides. This Crotalus adamanteus (Eastern diamondback rattlesnake) protein is Acidic phospholipase A2 beta.